The following is a 127-amino-acid chain: Fluoride-specific ion channel FluC (127 aa).

3 helical membrane passes run leucine 28–methionine 48, threonine 73–isoleucine 93, and valine 98–leucine 118. Residues glycine 77 and threonine 80 each coordinate Na(+).

Belongs to the fluoride channel Fluc/FEX (TC 1.A.43) family.

The protein resides in the cell inner membrane. The catalysed reaction is fluoride(in) = fluoride(out). Its activity is regulated as follows. Na(+) is not transported, but it plays an essential structural role and its presence is essential for fluoride channel function. Fluoride-specific ion channel. Important for reducing fluoride concentration in the cell, thus reducing its toxicity. This chain is Fluoride-specific ion channel FluC, found in Beijerinckia indica subsp. indica (strain ATCC 9039 / DSM 1715 / NCIMB 8712).